A 393-amino-acid chain; its full sequence is ATP phosphoribosyltransferase regulatory subunit (393 aa).

It belongs to the class-II aminoacyl-tRNA synthetase family. HisZ subfamily. As to quaternary structure, heteromultimer composed of HisG and HisZ subunits.

The protein localises to the cytoplasm. Its pathway is amino-acid biosynthesis; L-histidine biosynthesis; L-histidine from 5-phospho-alpha-D-ribose 1-diphosphate: step 1/9. Its function is as follows. Required for the first step of histidine biosynthesis. May allow the feedback regulation of ATP phosphoribosyltransferase activity by histidine. The sequence is that of ATP phosphoribosyltransferase regulatory subunit from Marinobacter nauticus (strain ATCC 700491 / DSM 11845 / VT8) (Marinobacter aquaeolei).